Here is a 357-residue protein sequence, read N- to C-terminus: MTSEAASKDPISVLSGFGAGTATSASKNGGRTTPSALTPRPRSGFVETEQVRDLTRRGLGFLNAGYPLHFRGPAGTGKTTLALHVAAQLGRPVIIITGDNELGTADLVGSQRGYHYRKVVDQFIHNVTKLEETANQHWTDHRLTTACREGFTLVYDEFTRSRPETHNVLLGVFEERMLFLPAQAREECYIKVHPEFRAIFTSNPQEYAGVHASQDALADRLATIDVDYPDRAMELAVASARTGMAEASAARIIDLVRAFRASGDYQQTPTMRASLMIARVAALEGLDVSVDDPRFVQLCSDALESRIFSGQRAEAVAREQRRAALYALIETYCPSVAKPRARRAGGGARAGVEGALP.

A compositionally biased stretch (polar residues) spans 22–36 (ATSASKNGGRTTPSA). The interval 22-43 (ATSASKNGGRTTPSALTPRPRS) is disordered. Residue 72-79 (GPAGTGKT) participates in ATP binding.

Belongs to the CbbQ/NirQ/NorQ/GpvN family. As to quaternary structure, forms homodimers, probably interacts with other GV proteins including GvpA.

It is found in the gas vesicle. The protein resides in the cytoplasm. It catalyses the reaction ATP + H2O = ADP + phosphate + H(+). In terms of biological role, an ATPase that functions in gas vesicle formation. A minor component of the gas vesicle, also found in soluble extracts. Gas vesicles (GV) are hollow, gas filled proteinaceous nanostructures. During planktonic growth they allow positioning of the organism at a favorable depth for light or nutrient acquisition. The polypeptide is Gas vesicle ATPase GvpN (Ancylobacter aquaticus).